Consider the following 196-residue polypeptide: Charged multivesicular body protein 1a (196 aa).

Met1 is subject to N-acetylmethionine. Residues 5–42 (LFQLKFTAKQLEKLAKKAEKDSKAEQAKVKKALQQKNV) adopt a coiled-coil conformation. Ser101 carries the post-translational modification Phosphoserine. Residues 102 to 124 (AMDLQKVSAVMDRFEQQVQNLDV) are a coiled coil. The residue at position 173 (Ser173) is a Phosphoserine. The MIT-interacting motif motif lies at 185–195 (DQLSRRLAALR).

Belongs to the SNF7 family. Probable peripherally associated component of the endosomal sorting required for transport complex III (ESCRT-III). ESCRT-III components are thought to multimerize to form a flat lattice on the perimeter membrane of the endosome. Several assembly forms of ESCRT-III may exist that interact and act sequentially. Self-associates. Interacts with CHMP1B. Interacts with VPS4A. Interacts with VPS4B. Interacts with PHF1. Interacts with IST1. Interacts with MITD1. In terms of tissue distribution, highly expressed in adult heart, kidney and liver. Expressed at lower levels in adult colon, spleen, lung, brain, testis and muscle. Also expressed in myoblasts and embryo fibroblasts.

It is found in the cytoplasm. The protein localises to the endosome membrane. It localises to the nucleus matrix. In terms of biological role, probable peripherally associated component of the endosomal sorting required for transport complex III (ESCRT-III) which is involved in multivesicular bodies (MVBs) formation and sorting of endosomal cargo proteins into MVBs. MVBs contain intraluminal vesicles (ILVs) that are generated by invagination and scission from the limiting membrane of the endosome and mostly are delivered to lysosomes enabling degradation of membrane proteins, such as stimulated growth factor receptors, lysosomal enzymes and lipids. The MVB pathway appears to require the sequential function of ESCRT-O, -I,-II and -III complexes. ESCRT-III proteins mostly dissociate from the invaginating membrane before the ILV is released. The ESCRT machinery also functions in topologically equivalent membrane fission events, such as the terminal stages of cytokinesis. ESCRT-III proteins are believed to mediate the necessary vesicle extrusion and/or membrane fission activities, possibly in conjunction with the AAA ATPase VPS4. Involved in cytokinesis. Involved in recruiting VPS4A and/or VPS4B to the midbody of dividing cells. May also be involved in chromosome condensation. Targets the Polycomb group (PcG) protein BMI1/PCGF4 to regions of condensed chromatin. May play a role in stable cell cycle progression and in PcG gene silencing. The chain is Charged multivesicular body protein 1a (Chmp1a) from Mus musculus (Mouse).